Reading from the N-terminus, the 131-residue chain is Translation initiation factor 5A (131 aa).

K37 bears the Hypusine mark.

It belongs to the eIF-5A family.

It localises to the cytoplasm. Its function is as follows. Functions by promoting the formation of the first peptide bond. In Methanococcus maripaludis (strain DSM 14266 / JCM 13030 / NBRC 101832 / S2 / LL), this protein is Translation initiation factor 5A.